Reading from the N-terminus, the 163-residue chain is MSFDSGCPPTPPVKLLFKKHSPFAVTPQRATSGAAGYDLCSSADVVVPPKSRSLIPTDLSFQFPRGVYGRIAPRSGLAVKFFIDVGAGVIDSDYRGIVSVLLFNFSDHNFNVRRGDRIAQLILERHLTPDLEERSGLDETARGAAGFGSTGGFDTGVCPSSFS.

This sequence belongs to the dUTPase family. Requires Mg(2+) as cofactor.

The catalysed reaction is dUTP + H2O = dUMP + diphosphate + H(+). It participates in pyrimidine metabolism; dUMP biosynthesis; dUMP from dCTP (dUTP route): step 2/2. This enzyme is involved in nucleotide metabolism: it produces dUMP, the immediate precursor of thymidine nucleotides and it decreases the intracellular concentration of dUTP so that uracil cannot be incorporated into DNA. The protein is Deoxyuridine 5'-triphosphate nucleotidohydrolase of Galliformes (FAdV-8).